The primary structure comprises 419 residues: Protein indeterminate-domain 14 (419 aa).

The tract at residues 1 to 58 (MIDYERSNTTKNINTHHHNPPPSSSSSDLLPDGNGTAVTQKRKRRPAGTPDPEAEVVS) is disordered. C2H2-type zinc fingers lie at residues 70–92 (YVCE…RRRH), 112–142 (YVCP…RRKH), and 148–175 (WICE…TRGH). Residues Cys150, Cys153, His166, Cys170, Cys177, Cys179, His192, and Cys196 each contribute to the Zn(2+) site. The CCHC-type 2; atypical zinc finger occupies 175–198 (HSCDCGRVFSRVESFIEHQDTCTV). An SHR-binding region spans residues 185–197 (RVESFIEHQDTCT). Disordered stretches follow at residues 200 to 259 (RSQP…PSTL) and 298 to 318 (SEVE…EEAR). Low complexity-rich tracts occupy residues 213 to 230 (QHTT…NNEN) and 246 to 259 (RRQS…PSTL). The stretch at 313-349 (EREEARRETKRQIEIAELEFAEAKRIRQHARAELHKA) forms a coiled coil.

In terms of assembly, homo- and heterodimer of IDD14alpha and IDD14beta. As to expression, expressed in cotyledons and the vasculature of reosette leaves. Weak expression in hypocotyls and floral organs, but not detected in roots and inflorescence stems.

It is found in the nucleus. Its function is as follows. Transcription factor regulating starch metabolism by binding directly to the promoter of QQS. The IDD14beta isoform attenuates the transcription factor activity by competitively forming heterodimers with reduced DNA-binding capacity. Regulates lateral organ morphogenesis and gravitropic responses. Has a redundant role with IDD16 in directing leaf and floral organ morphogenesis. Involved in the establishment of auxin gradients through the regulation of auxin biosynthesis and transport. The polypeptide is Protein indeterminate-domain 14 (Arabidopsis thaliana (Mouse-ear cress)).